The primary structure comprises 609 residues: Glutamine--fructose-6-phosphate aminotransferase [isomerizing] (609 aa).

The active-site Nucleophile; for GATase activity is the C2. The Glutamine amidotransferase type-2 domain occupies 2 to 219 (CGIVGYIGGR…DGECARLTRD (218 aa)). 2 SIS domains span residues 285–424 (SSDL…LRGT) and 458–599 (LARE…VDQP). K604 functions as the For Fru-6P isomerization activity in the catalytic mechanism.

As to quaternary structure, homodimer.

Its subcellular location is the cytoplasm. The enzyme catalyses D-fructose 6-phosphate + L-glutamine = D-glucosamine 6-phosphate + L-glutamate. In terms of biological role, catalyzes the first step in hexosamine metabolism, converting fructose-6P into glucosamine-6P using glutamine as a nitrogen source. The sequence is that of Glutamine--fructose-6-phosphate aminotransferase [isomerizing] from Gloeobacter violaceus (strain ATCC 29082 / PCC 7421).